We begin with the raw amino-acid sequence, 107 residues long: DNA-directed RNA polymerase subunit omega (107 aa).

The tract at residues 81-107 is disordered; the sequence is MEEEAAKGNADAGQGEGDAPKTPGQDG.

It belongs to the RNA polymerase subunit omega family. As to quaternary structure, the RNAP catalytic core consists of 2 alpha, 1 beta, 1 beta' and 1 omega subunit. When a sigma factor is associated with the core the holoenzyme is formed, which can initiate transcription.

The enzyme catalyses RNA(n) + a ribonucleoside 5'-triphosphate = RNA(n+1) + diphosphate. Promotes RNA polymerase assembly. Latches the N- and C-terminal regions of the beta' subunit thereby facilitating its interaction with the beta and alpha subunits. This chain is DNA-directed RNA polymerase subunit omega, found in Alkalilimnicola ehrlichii (strain ATCC BAA-1101 / DSM 17681 / MLHE-1).